We begin with the raw amino-acid sequence, 227 residues long: N-acetyltransferase family 8 member 7 (227 aa).

The next 2 membrane-spanning stretches (helical) occupy residues 36 to 56 (MLLL…LFLA) and 58 to 78 (GSWL…WFLA). An N-acetyltransferase domain is found at 61-220 (LLVLLSILTL…PMINLKYSLT (160 aa)).

The protein belongs to the camello family.

The protein localises to the membrane. It catalyses the reaction L-lysyl-[protein] + acetyl-CoA = N(6)-acetyl-L-lysyl-[protein] + CoA + H(+). Functionally, has histone acetyltransferase activity in vitro, with specificity for histone H4. The protein is N-acetyltransferase family 8 member 7 of Mus musculus (Mouse).